Reading from the N-terminus, the 401-residue chain is Probable sodium/metabolite cotransporter BASS1, chloroplastic (401 aa).

The N-terminal 70 residues, 1-70, are a transit peptide targeting the chloroplast; that stretch reads MASAISLSLL…RRSRFDFVPR (70 aa). 9 consecutive transmembrane segments (helical) span residues 92–112, 122–142, 156–176, 187–207, 212–232, 247–267, 278–298, 311–331, and 371–391; these read FVGEAVSTAFPIWVSLGCLLG, VTPNWTIVGLTITMLGMGMTL, ELFAGFLLQYSVMPLSAFFVS, AGLILVGCCPGGTASNIVTYI, VALSVLMTAASTVSAVIMTPL, LGLLMSTLQVVLLPVLAGAFL, VSPVMPPIAVGTVAILCGYAI, QVVLASCLLHISGFLFGYLFS, and VPCAVSSVCHSILGSVLAGIW.

The protein belongs to the bile acid:sodium symporter (BASS) (TC 2.A.28) family.

It localises to the membrane. It is found in the plastid. The protein resides in the chloroplast envelope. In terms of biological role, may function as sodium-coupled metabolite transporter across the chloroplast envelope. The protein is Probable sodium/metabolite cotransporter BASS1, chloroplastic (BASS1) of Arabidopsis thaliana (Mouse-ear cress).